The sequence spans 548 residues: Peptidyl-prolyl isomerase CWC27 (548 aa).

The PPIase cyclophilin-type domain occupies 11 to 193; sequence PTASVIIHTT…YPVKIERIEI (183 aa). 2 disordered regions span residues 204 to 436 and 504 to 548; these read RSRV…GDEE and TLKD…RGAK. Basic and acidic residues-rich tracts occupy residues 328–340, 353–366, 406–428, and 504–516; these read EAPR…RANE, IHSE…KKSA, RLEK…KDGE, and TLKD…RDAR.

The protein belongs to the cyclophilin-type PPIase family. CWC27 subfamily. As to quaternary structure, associated with the spliceosome.

The protein localises to the cytoplasm. The protein resides in the nucleus. It carries out the reaction [protein]-peptidylproline (omega=180) = [protein]-peptidylproline (omega=0). Functionally, PPIases accelerate the folding of proteins. It catalyzes the cis-trans isomerization of proline imidic peptide bonds in oligopeptides. Involved in pre-mRNA splicing. The protein is Peptidyl-prolyl isomerase CWC27 (CWC27) of Gibberella zeae (strain ATCC MYA-4620 / CBS 123657 / FGSC 9075 / NRRL 31084 / PH-1) (Wheat head blight fungus).